A 1885-amino-acid polypeptide reads, in one-letter code: Fatty acid synthase subunit alpha (1885 aa).

A compositionally biased stretch (basic and acidic residues) spans 92–107 (PDPADLAPKETPKQEE). Residues 92 to 140 (PDPADLAPKETPKQEESTPSAPAAATPTPAAAAAPTPAPAPASAGPVES) are disordered. Low complexity predominate over residues 108-126 (STPSAPAAATPTPAAAAAP). Residues 146 to 221 (VKANLLIHVL…EQFQDSFSGQ (76 aa)) form the Carrier domain. S181 carries the post-translational modification O-(pantetheine 4'-phosphoryl)serine. Residues 1121–1661 (IQEIVVQHDL…QKGAQAVVVH (541 aa)) enclose the Ketosynthase family 3 (KS3) domain. Active-site for beta-ketoacyl synthase activity residues include C1304, H1546, and H1587. Residues D1771, V1772, and E1773 each contribute to the Mg(2+) site. Acetyl-CoA contacts are provided by residues 1771 to 1773 (DVE), Y1797, S1807, 1816 to 1826 (EAVFKALGVES), 1840 to 1843 (RDVN), and 1870 to 1872 (ISH). Residues S1871 and H1872 each contribute to the Mg(2+) site.

This sequence belongs to the thiolase-like superfamily. Fungal fatty acid synthetase subunit alpha family. [Alpha(6)beta(6)] hexamers of two multifunctional subunits (alpha and beta).

The catalysed reaction is acetyl-CoA + n malonyl-CoA + 2n NADPH + 4n H(+) = a long-chain-acyl-CoA + n CoA + n CO2 + 2n NADP(+).. It catalyses the reaction a fatty acyl-[ACP] + malonyl-[ACP] + H(+) = a 3-oxoacyl-[ACP] + holo-[ACP] + CO2. The enzyme catalyses a (3R)-hydroxyacyl-[ACP] + NADP(+) = a 3-oxoacyl-[ACP] + NADPH + H(+). Functionally, fatty acid synthetase catalyzes the formation of long-chain fatty acids from acetyl-CoA, malonyl-CoA and NADPH. The alpha subunit contains domains for: acyl carrier protein, 3-oxoacyl-[acyl-carrier-protein] reductase, and 3-oxoacyl-[acyl-carrier-protein] synthase. The protein is Fatty acid synthase subunit alpha (FAS2) of Candida albicans (Yeast).